We begin with the raw amino-acid sequence, 169 residues long: S-ribosylhomocysteine lyase (169 aa).

Fe cation-binding residues include His-54, His-58, and Cys-128.

It belongs to the LuxS family. Homodimer. Fe cation serves as cofactor.

The catalysed reaction is S-(5-deoxy-D-ribos-5-yl)-L-homocysteine = (S)-4,5-dihydroxypentane-2,3-dione + L-homocysteine. Its function is as follows. Involved in the synthesis of autoinducer 2 (AI-2) which is secreted by bacteria and is used to communicate both the cell density and the metabolic potential of the environment. The regulation of gene expression in response to changes in cell density is called quorum sensing. Catalyzes the transformation of S-ribosylhomocysteine (RHC) to homocysteine (HC) and 4,5-dihydroxy-2,3-pentadione (DPD). This chain is S-ribosylhomocysteine lyase, found in Shewanella halifaxensis (strain HAW-EB4).